We begin with the raw amino-acid sequence, 416 residues long: Interleukin-1 receptor type 2 (416 aa).

A signal peptide spans 1–13; the sequence is MFILLVLVTGVSA. The Extracellular portion of the chain corresponds to 14 to 355; sequence FTTPAVVHTG…FQSLHTTVKE (342 aa). Ig-like C2-type domains lie at 29–136, 146–233, and 249–357; these read PVTS…LELK, PLVS…YNIT, and PVII…KEVS. 3 disulfides stabilise this stretch: Cys-42–Cys-128, Cys-64–Cys-120, and Cys-164–Cys-219. Asn-124, Asn-208, Asn-231, and Asn-289 each carry an N-linked (GlcNAc...) asparagine glycan. A disulfide bridge connects residues Cys-270 and Cys-338. A helical transmembrane segment spans residues 356-381; that stretch reads VSSTFSWGIALAPLSLIILVVGAIWI. The Cytoplasmic segment spans residues 382 to 416; sequence RRRCKRQAGKTYGLTKLPTDNQDFPSSPNQIKEMK. A disordered region spans residues 396-416; that stretch reads TKLPTDNQDFPSSPNQIKEMK. A compositionally biased stretch (polar residues) spans 399–416; sequence PTDNQDFPSSPNQIKEMK.

This sequence belongs to the interleukin-1 receptor family. In terms of assembly, associates with IL1RAP to form a non-signaling interleukin-1 receptor complex. A soluble form (sIL1R2) can also be produced by proteolytic cleavage at the cell surface (shedding) involving a metalloproteinase.

The protein localises to the membrane. It is found in the cell membrane. It localises to the secreted. In terms of biological role, non-signaling receptor for IL1A, IL1B and IL1RN. Reduces IL1B activities. Serves as a decoy receptor by competitive binding to IL1B and preventing its binding to IL1R1. Also modulates cellular response through non-signaling association with IL1RAP after binding to IL1B. IL1R2 (membrane and secreted forms) preferentially binds IL1B and poorly IL1A and IL1RN. The secreted IL1R2 recruits secreted IL1RAP with high affinity; this complex formation may be the dominant mechanism for neutralization of IL1B by secreted/soluble receptors. This Rattus norvegicus (Rat) protein is Interleukin-1 receptor type 2 (Il1r2).